The following is a 499-amino-acid chain: Dual specificity protein kinase CLK2 (499 aa).

The tract at residues 1 to 67 (MPHPRRYHSS…SYDDRSSDRR (67 aa)) is disordered. The span at 8–21 (HSSERGSRGSYREH) shows a compositional bias: basic and acidic residues. Residues 22-33 (YRSRKHKRRRSR) are compositionally biased toward basic residues. Ser-34 carries the post-translational modification Phosphoserine; by PKB/AKT1. A compositionally biased stretch (basic and acidic residues) spans 47 to 67 (REDSYHVRSRSSYDDRSSDRR). Ser-98 bears the Phosphoserine mark. At Tyr-99 the chain carries Phosphotyrosine; by autocatalysis. Residues 101–143 (YQRENSSYRSQRSSRRKHRRRRRRSRTFSRSSSQHSSRRAKSV) form a disordered region. Basic residues predominate over residues 112–127 (RSSRRKHRRRRRRSRT). Thr-127 carries the post-translational modification Phosphothreonine; by PKB/AKT1. Position 142 is a phosphoserine; by autocatalysis (Ser-142). Tyr-153 is modified (phosphotyrosine). A Protein kinase domain is found at 163–479 (YEIVSTLGEG…LGEALQHPFF (317 aa)). ATP contacts are provided by residues 169-177 (LGEGTFGRV) and Lys-193. Asp-290 (proton acceptor) is an active-site residue. Thr-344 carries the phosphothreonine; by PKB/AKT2 modification.

This sequence belongs to the protein kinase superfamily. CMGC Ser/Thr protein kinase family. Lammer subfamily. As to quaternary structure, interacts with RBMX. Interacts with AKT1 and UBL5. In terms of processing, autophosphorylates on all three types of residues. Phosphorylation on Ser-34 and Thr-127 by AKT1 is induced by ionizing radiation or insulin. Phosphorylation plays a critical role in cell proliferation following low dose radiation and prevents cell death following high dose radiation. Phosphorylation at Thr-344 by PKB/AKT2 induces its kinase activity which is required for its stability. The phosphorylation status at Ser-142 influences its subnuclear localization; inhibition of phosphorylation at Ser-142 results in accumulation in the nuclear speckle. In terms of tissue distribution, endothelial cells. Expressed in androgen-dependent prostate cancer cells.

The protein localises to the nucleus. It is found in the nucleus speckle. The enzyme catalyses L-seryl-[protein] + ATP = O-phospho-L-seryl-[protein] + ADP + H(+). It catalyses the reaction L-threonyl-[protein] + ATP = O-phospho-L-threonyl-[protein] + ADP + H(+). It carries out the reaction L-tyrosyl-[protein] + ATP = O-phospho-L-tyrosyl-[protein] + ADP + H(+). Its activity is regulated as follows. 5,6-dichloro-1-b-D-ribofuranosylbenzimidazole (DRB) inhibits autophosphorylation. TG003 inhibits its kinase activity and affects the regulation of alternative splicing mediated by phosphorylation of SR proteins. In terms of biological role, dual specificity kinase acting on both serine/threonine and tyrosine-containing substrates. Phosphorylates serine- and arginine-rich (SR) proteins of the spliceosomal complex. May be a constituent of a network of regulatory mechanisms that enable SR proteins to control RNA splicing and can cause redistribution of SR proteins from speckles to a diffuse nucleoplasmic distribution. Acts as a suppressor of hepatic gluconeogenesis and glucose output by repressing PPARGC1A transcriptional activity on gluconeogenic genes via its phosphorylation. Phosphorylates PPP2R5B thereby stimulating the assembly of PP2A phosphatase with the PPP2R5B-AKT1 complex leading to dephosphorylation of AKT1. Phosphorylates: PTPN1, SRSF1 and SRSF3. Regulates the alternative splicing of tissue factor (F3) pre-mRNA in endothelial cells. Phosphorylates PAGE4 at several serine and threonine residues and this phosphorylation attenuates the ability of PAGE4 to potentiate the transcriptional activator activity of JUN. The chain is Dual specificity protein kinase CLK2 (CLK2) from Homo sapiens (Human).